A 303-amino-acid chain; its full sequence is RELT-like protein 2 (303 aa).

Residues 15–35 form a helical membrane-spanning segment; the sequence is LYMLFLLVLVFFLMGLVGFMI. Disordered stretches follow at residues 46–67 and 111–303; these read CRTSRGSEPDDAQLQPPEDDDM and SSLQ…AGGV. At Ser-52 the chain carries Phosphoserine. Basic and acidic residues-rich tracts occupy residues 148–158 and 172–188; these read RSKEGKSRPRP and THIEKRYGLHEHRDGSP. The span at 194–212 shows a compositional bias: gly residues; that stretch reads GSGGGQDPGGGQGPGGGQP.

Belongs to the RELT family. In terms of assembly, interacts with RELT, RELL1, OXSR1, PLSCR1 and TRAF2.

It is found in the cell membrane. In terms of biological role, induces activation of MAPK14/p38 cascade, when overexpressed. Induces apoptosis, when overexpressed. This Bos taurus (Bovine) protein is RELT-like protein 2 (RELL2).